A 430-amino-acid polypeptide reads, in one-letter code: Phosphoglucosamine mutase (430 aa).

The active-site Phosphoserine intermediate is serine 93. Residues serine 93, aspartate 227, aspartate 229, and aspartate 231 each contribute to the Mg(2+) site. Serine 93 is subject to Phosphoserine.

This sequence belongs to the phosphohexose mutase family. Requires Mg(2+) as cofactor. Post-translationally, activated by phosphorylation.

It catalyses the reaction alpha-D-glucosamine 1-phosphate = D-glucosamine 6-phosphate. Its function is as follows. Catalyzes the conversion of glucosamine-6-phosphate to glucosamine-1-phosphate. In Thermosipho africanus (strain TCF52B), this protein is Phosphoglucosamine mutase.